A 348-amino-acid chain; its full sequence is Gamma-glutamyl hydrolase 1 (348 aa).

The signal sequence occupies residues 1-23 (MIDNNCLYKEELNRNSYSGLAKE). The 297-residue stretch at 46–342 (SPDPNLNYRP…RGYDEVYIFT (297 aa)) folds into the Gamma-glutamyl hydrolase domain. Cys-156 (nucleophile) is an active-site residue. His-269 is an active-site residue.

The protein belongs to the peptidase C26 family. Highly expressed in roots and at lower levels in leaves, stems and siliques.

The protein resides in the vacuole. It localises to the secreted. Its subcellular location is the extracellular space. It is found in the cell wall. The catalysed reaction is (6S)-5,6,7,8-tetrahydrofolyl-(gamma-L-Glu)(n) + (n-1) H2O = (6S)-5,6,7,8-tetrahydrofolate + (n-1) L-glutamate. In terms of biological role, cleaves the polyglutamate sidechains of folate polyglutamates in the vacuole. Is important for polyglutamyl tail length determination before vacuolar exit. Plays a role in folate stability and intracellular folate content. This chain is Gamma-glutamyl hydrolase 1 (GGH1), found in Arabidopsis thaliana (Mouse-ear cress).